A 126-amino-acid polypeptide reads, in one-letter code: Fluoride-specific ion channel FluC 2 (126 aa).

4 helical membrane passes run 11 to 31, 43 to 63, 69 to 89, and 93 to 113; these read IFLIGAGGFLGAICRFSLCEL, VLGSFMLGLIMYDTEYIGFIG, AFGTGFMGAFTTFSTFAVQSF, and FFPALENISVNLFLALVGVFM. Positions 76 and 79 each coordinate Na(+).

It belongs to the fluoride channel Fluc/FEX (TC 1.A.43) family.

Its subcellular location is the cell membrane. It carries out the reaction fluoride(in) = fluoride(out). Its activity is regulated as follows. Na(+) is not transported, but it plays an essential structural role and its presence is essential for fluoride channel function. Its function is as follows. Fluoride-specific ion channel. Important for reducing fluoride concentration in the cell, thus reducing its toxicity. This Methanosarcina barkeri (strain Fusaro / DSM 804) protein is Fluoride-specific ion channel FluC 2.